The following is a 327-amino-acid chain: Protein MRG2 (327 aa).

The disordered stretch occupies residues 1 to 40 (MGSPNAAAETDLTTDDFIGDTRRDSGSDTETNTDCDGEDL). The 50-residue stretch at 52–101 (FEEGERVLAKHSDCFYEAKVLKVEFKDNEWKYFVHYIGWNKSWDEWIRLD) folds into the Tudor-knot domain. The segment at 133-156 (SKMKPRSPNVARGRKRKQDSVDTE) is disordered. The MRG domain maps to 162 to 327 (SDNLLSFNIP…AVEEMEKKEG (166 aa)).

In terms of assembly, interacts with HAM1 and HAM2. Interacts (via MRG domain) with CO. Component of the NuA4 histone acetyltransferase complex. In terms of tissue distribution, ubiquitous. Mainly expressed in the vasculature of cotyledons and leaves, and in roots and inflorescences.

The protein resides in the nucleus. Its function is as follows. Chromatin remodeling factor. Acts as a 'reader' protein by binding to H3K4me3 and H3K36me3 to control histone H4 acetylation. Increases the transcriptional levels of the flowering time genes FLC and FT. Binds the chromatin at the FT promoter upon interaction with CO. This Arabidopsis thaliana (Mouse-ear cress) protein is Protein MRG2.